The chain runs to 186 residues: Ribosome-recycling factor (186 aa).

The protein belongs to the RRF family.

It localises to the cytoplasm. In terms of biological role, responsible for the release of ribosomes from messenger RNA at the termination of protein biosynthesis. May increase the efficiency of translation by recycling ribosomes from one round of translation to another. The polypeptide is Ribosome-recycling factor (Cupriavidus pinatubonensis (strain JMP 134 / LMG 1197) (Cupriavidus necator (strain JMP 134))).